The primary structure comprises 1759 residues: MESDKSMACLNRILMNKMMFVEDKISTLKMVADYYQKEVKYDFDAVESPREAPVFRCTCRFLGYTIMTQGIGKKNPKQEAARQMLLLLSGDVETNPGPVQSRPVYYRYNDPRYTRLEKAIERRDDKIKTLIKELRRQIKNRKIYSQGMFDKLTKQISDGIKDGVGSEQMNGNLTRICDFLENTLPGLQANIQATVIDTTDKYVSLKEDIMKIVLVILLVRLLMVWKKYRASLCVILIFIFKFYGFDQKLIDLIMDLKNKIFSQGALEDTVEEVVYHPWFHTCGKIIFAVMAFLTIKKIPGKQDWDSYITRLDRIPKSIEGAKKITDYCSEYFNIANDQIKMMVLGKTKEELQRANGLYGEIQAWAQEVRQYLELDQRNKIDLDTETANRVEQLWIKGLKFKSEPLLSKEMSALVHTTLLPAKQLYEYVSCSPVKGGGPRMRPICLWLVGESGVGKTEMVYPLCIDVLREMGMIKKDDFHHQVYGRQVETEFWDGYKGQKIVIYDDAFQKKDDKTAANPEIFEVIRSCNTFPQHLHMAALHDKNTFSAAELLLYTTNDYNVKLESITFPDAFFNRMGDMAYKVSPKKEYGIETEKGNSGKTYLKLDKSKLDKTKAIDLSVYEFQKIVRDEKSDAGWIDSGSPLDYEDFAKLVCSKWKEAKQSSMNKLKFLEEYAIRAQVGSEENSEYGDCIDFVDDIAKRLQKGETLEEIEFDYASDPEMFTQYYHFKSTIKPASRWQKYKDRMDICLSDCKTYLAKKYEEIKKILAEHPILTILGMIGVALSALAMYYWFSKSLDPVEAEVAPSGDAKTVRLPRKLVEIGASGDVKTQKIVKPVVETEWHRNNKGEIEISCDECGMHRMSAFNNMTDEEFDNCTYEDLNKDQKRELAQWSTKDSWLGRFFLSRDRKNKVGIWAEVGQSGDVKTNKAQIKRVEAGAEELVTVALTQGCSDDAAHNLMIDVFQKNTYRMSYFRGDKRYQLGNCTFVRGWSFIMPYHFVQAVFARRLPPNTIISLSQQMSEDLMQIPLSHFFSAGVDNFYLTDNCVRLPFKNGDFRDCVMVNLHSRMCTPHRDLVRHFILTSDQGKLKGSFSGAMATFHVNNMGLYRVYNWLNAVRPCDKKIEIFHPEDGFEYPEESYIQRDCYEYNAPTRTGDCGSIIGLYNKYLERKIIGMHIAGNDAEEHGYACPLTQECLETAFSALVNKNKKNISSQFYYEIPNMVDPLGDSSVPEGKFYALGKSSIRVGQAVNSSIIPSRIYGKLSVPTMKPALLKPTILNNKVHNPLLSGLKKCGVDTAVLSDDEVLSASQDVCRVMLNQYNKNLNKTKYQRILTYEEAIRGTQDDEFMCAINRTTSPGFPYAQMKRNAPGKQQWMGFGEEFDFTSNYALALRKDVEQLIEDCASGKISNVIFVDTLKDERRDIAKVNVGKTRVFSAGPQHFVVAFRQYFLPFAAWLMHNRISNEVAVGTNVYSSDWERIAKRLKTKGSHVIAGDFGNFDGSLVAQILWAIFWEIFVVWLKQFIDIENSEGKRILCICLGLWSHLVHSVHIYEDNVYMWTHSQPSGNPFTVIINCLYNSIIMRLSWIRVMEKFQPRLKSMKWFNEYVALITYGDDNVLNIDAKVVEWFNQINISEVMTEMRHEYTDEAKTGDIVKSRKLEDIFFLKRKFRFSPELQRHVAPLKIEVIYEMLNWSRRSIDPDEILMSNIETAFREVVYHGKEEYDKLRSAVLALKVPQELPENPQILTYNQYLHDIEYLADPLYDF.

Residues 23-90 form the DRBM domain; sequence DKISTLKMVA…ARQMLLLLSG (68 aa). Residues 113–140 adopt a coiled-coil conformation; the sequence is YTRLEKAIERRDDKIKTLIKELRRQIKN. The 175-residue stretch at 421-595 folds into the SF3 helicase domain; it reads AKQLYEYVSC…KEYGIETEKG (175 aa). 449 to 456 is an ATP binding site; the sequence is GESGVGKT. The region spanning 950 to 1191 is the Peptidase C3 domain; sequence DAAHNLMIDV…YACPLTQECL (242 aa). Residues histidine 994, aspartate 1054, and cysteine 1152 each act as for picornain 3C-like protease activity in the active site. Positions 1483–1622 constitute a RdRp catalytic domain; sequence SHVIAGDFGN…NIDAKVVEWF (140 aa).

In terms of processing, protein 1A might be expressed through a ribosomal skip from one codon to the next without formation of a peptide bond.

The enzyme catalyses RNA(n) + a ribonucleoside 5'-triphosphate = RNA(n+1) + diphosphate. Protein 1A functions as a suppressor of RNA-mediated gene silencing, an antiviral defense mechanism of insect cells. Binds to long dsRNA and to a lesser extent, to siRNA. Functionally, RNA-directed RNA polymerase replicates genomic and antigenomic RNA. This is Replicase polyprotein from Drosophila C virus (strain EB) (DCV).